A 75-amino-acid polypeptide reads, in one-letter code: Iota-conotoxin-like R11.3 (75 aa).

Positions 1 to 19 are cleaved as a signal peptide; that stretch reads MKLCLTFLLVLMILASVTG. A propeptide spanning residues 20–34 is cleaved from the precursor; that stretch reads EKLSEQTLRRAARKN. 4 cysteine pairs are disulfide-bonded: C39–C53, C46–C58, C52–C63, and C57–C70.

Belongs to the conotoxin I1 superfamily. As to expression, expressed by the venom duct.

The protein localises to the secreted. Functionally, iota-conotoxins bind to voltage-gated sodium channels (Nav) and act as agonists by shifting the voltage-dependence of activation to more hyperpolarized levels. Produces general excitatory symptoms. This Conus radiatus (Rayed cone) protein is Iota-conotoxin-like R11.3.